Here is a 231-residue protein sequence, read N- to C-terminus: Octanoyltransferase (231 aa).

In terms of domain architecture, BPL/LPL catalytic spans 49–231 (SEAAEQVWLL…KRTFSEVFGS (183 aa)). Residues 87 to 94 (RGGQITYH), 162 to 164 (AIG), and 175 to 177 (GVS) contribute to the substrate site. The Acyl-thioester intermediate role is filled by cysteine 193.

This sequence belongs to the LipB family.

The protein localises to the cytoplasm. It carries out the reaction octanoyl-[ACP] + L-lysyl-[protein] = N(6)-octanoyl-L-lysyl-[protein] + holo-[ACP] + H(+). Its pathway is protein modification; protein lipoylation via endogenous pathway; protein N(6)-(lipoyl)lysine from octanoyl-[acyl-carrier-protein]: step 1/2. Its function is as follows. Catalyzes the transfer of endogenously produced octanoic acid from octanoyl-acyl-carrier-protein onto the lipoyl domains of lipoate-dependent enzymes. Lipoyl-ACP can also act as a substrate although octanoyl-ACP is likely to be the physiological substrate. The sequence is that of Octanoyltransferase from Nitrobacter winogradskyi (strain ATCC 25391 / DSM 10237 / CIP 104748 / NCIMB 11846 / Nb-255).